The primary structure comprises 181 residues: Cyclic AMP-dependent transcription factor ATF-3 (181 aa).

A Glycyl lysine isopeptide (Lys-Gly) (interchain with G-Cter in SUMO2) cross-link involves residue lysine 78. The bZIP domain occupies 86-149 (DERKKRRRER…QHLIYMLNLH (64 aa)). The segment at 88–110 (RKKRRRERNKIAAAKCRNKKKEK) is basic motif. A leucine-zipper region spans residues 114–142 (LQKESEKLESVNAELKAQIEELKNEKQHL). Threonine 162 is subject to Phosphothreonine. Lysine 175 participates in a covalent cross-link: Glycyl lysine isopeptide (Lys-Gly) (interchain with G-Cter in SUMO2).

Belongs to the bZIP family. ATF subfamily. In terms of assembly, binds DNA as a homodimer or a heterodimer. Interacts with KAT5; promoting KAT5 autoacetylation and KAT5 deubiquitination by USP7.

The protein localises to the nucleus. In terms of biological role, this protein binds the cAMP response element (CRE) (consensus: 5'-GTGACGT[AC][AG]-3'), a sequence present in many viral and cellular promoters. Represses transcription from promoters with ATF sites. It may repress transcription by stabilizing the binding of inhibitory cofactors at the promoter. Activates transcription presumably by sequestering inhibitory cofactors away from the promoters. Its function is as follows. Stress-induced isoform, counteracts the transcriptional repression of isoform 1. The chain is Cyclic AMP-dependent transcription factor ATF-3 from Homo sapiens (Human).